Here is a 185-residue protein sequence, read N- to C-terminus: Large ribosomal subunit protein uL22 (185 aa).

It belongs to the universal ribosomal protein uL22 family. As to quaternary structure, part of the 50S ribosomal subunit.

This protein binds specifically to 23S rRNA. It makes multiple contacts with different domains of the 23S rRNA in the assembled 50S subunit and ribosome. Functionally, the globular domain of the protein is located near the polypeptide exit tunnel on the outside of the subunit, while an extended beta-hairpin is found that lines the wall of the exit tunnel in the center of the 70S ribosome. The sequence is that of Large ribosomal subunit protein uL22 from Caldivirga maquilingensis (strain ATCC 700844 / DSM 13496 / JCM 10307 / IC-167).